Reading from the N-terminus, the 495-residue chain is COP9 signalosome complex subunit 2 (495 aa).

The segment at 1–26 (MGDEYMDDDEDYGFEYEDDSGSEPDV) is disordered. The PCI domain maps to 254 to 416 (AHTDFFEAFK…GMIEMPKNKK (163 aa)). The disordered stretch occupies residues 426–468 (PNAGDQGTTKSDSKPGTSSEPSTTTSVTSSILQGPPATSSCHQ). Polar residues predominate over residues 430–441 (DQGTTKSDSKPG). Residues 442-455 (TSSEPSTTTSVTSS) are compositionally biased toward low complexity.

It belongs to the CSN2 family. Component of the CSN complex, probably composed of csn-1, csn-2, csn-3, csn-4, csn-5, csn-6 and csn-7. Within the complex it probably interacts directly with csn-1, csn-3 and csn-4.

It localises to the cytoplasm. Its subcellular location is the nucleus. Its function is as follows. Essential component of the COP9 signalosome complex (CSN), a complex involved in various cellular and developmental processes. The CSN complex is an essential regulator of the ubiquitin (Ubl) conjugation pathway by mediating the deneddylation of the cullin subunits of the SCF-type E3 ligase complexes, leading to decrease the Ubl ligase activity of SCF. The CSN complex plays an essential role in embryogenesis and oogenesis and is required to regulate microtubule stability in the early embryo. Mediates mei-3/katanin targeting for degradation at the meiosis to mitosis transition via deneddylation of cul-3. In Caenorhabditis elegans, this protein is COP9 signalosome complex subunit 2 (csn-2).